Reading from the N-terminus, the 158-residue chain is Salt stress-responsive protein YocM (158 aa).

Positions 51–158 (GKGDASFPSM…GQAKTIVIDD (108 aa)) constitute a sHSP domain.

Belongs to the small heat shock protein (HSP20) family. Forms homodimers, homotetramers and higher oligomers.

The protein localises to the cytoplasm. In terms of biological role, part of the cellular protein quality control system with a specific role in salt stress response. May facilitate protein homeostasis, together with chemical chaperones that accumulate during the salt stress response. Increased levels of YocM protects against both heat and salt stress. In vitro, displays an unusual aggregase chaperone activity. The sequence is that of Salt stress-responsive protein YocM (yocM) from Bacillus subtilis (strain 168).